Consider the following 467-residue polypeptide: Sialic acid-binding Ig-like lectin 7 (467 aa).

An N-terminal signal peptide occupies residues Met-1–Gly-18. The Extracellular portion of the chain corresponds to Gln-19–Leu-353. One can recognise an Ig-like V-type domain in the interval Gly-39–Phe-122. Cys-46 and Cys-106 are disulfide-bonded. Asn-105 carries N-linked (GlcNAc...) asparagine glycosylation. N-acetylneuraminate is bound by residues Arg-124 and Lys-131 to Lys-135. N-linked (GlcNAc...) asparagine glycosylation is found at Asn-142 and Asn-165. Residues Pro-150–Gln-233 form the Ig-like C2-type 1 domain. Cys-168 and Cys-217 are joined by a disulfide. Residues Asn-229, Asn-235, Asn-242, and Asn-260 are each glycosylated (N-linked (GlcNAc...) asparagine). An Ig-like C2-type 2 domain is found at Pro-240 to Ser-336. Residues Cys-276 and Cys-320 are joined by a disulfide bond. The N-linked (GlcNAc...) asparagine glycan is linked to Asn-334. Residues Gly-354–Val-376 traverse the membrane as a helical segment. Over Arg-377–Lys-467 the chain is Cytoplasmic. Positions Ile-401–Glu-412 are enriched in polar residues. The disordered stretch occupies residues Ile-401–Glu-431. Ser-429 carries the phosphoserine modification. An ITIM motif motif is present at residues Ile-435–Leu-440. Residues His-443–Lys-467 are disordered. Over residues Leu-450–Tyr-460 the composition is skewed to polar residues.

Belongs to the immunoglobulin superfamily. SIGLEC (sialic acid binding Ig-like lectin) family. Interacts with PTPN6/SHP-1 upon phosphorylation. Tyrosine phosphorylated. Predominantly expressed by resting and activated natural killer cells and at lower levels by granulocytes and monocytes. High expression found in placenta, liver, lung, spleen, and peripheral blood leukocytes.

Its subcellular location is the membrane. Putative adhesion molecule that mediates sialic-acid dependent binding to cells. Preferentially binds to alpha-2,3- and alpha-2,6-linked sialic acid. Also binds disialogangliosides (disialogalactosyl globoside, disialyl lactotetraosylceramide and disialyl GalNAc lactotetraoslylceramide). The sialic acid recognition site may be masked by cis interactions with sialic acids on the same cell surface. In the immune response, may act as an inhibitory receptor upon ligand induced tyrosine phosphorylation by recruiting cytoplasmic phosphatase(s) via their SH2 domain(s) that block signal transduction through dephosphorylation of signaling molecules. Mediates inhibition of natural killer cells cytotoxicity. May play a role in hemopoiesis. Inhibits differentiation of CD34+ cell precursors towards myelomonocytic cell lineage and proliferation of leukemic myeloid cells (in vitro). This is Sialic acid-binding Ig-like lectin 7 (SIGLEC7) from Homo sapiens (Human).